A 102-amino-acid polypeptide reads, in one-letter code: NADH-quinone oxidoreductase subunit K (102 aa).

3 consecutive transmembrane segments (helical) span residues 5 to 25 (ITHY…GIFL), 31 to 51 (IIIL…FVAF), and 66 to 86 (FVLT…VVFF).

It belongs to the complex I subunit 4L family. NDH-1 is composed of 14 different subunits. Subunits NuoA, H, J, K, L, M, N constitute the membrane sector of the complex.

It is found in the cell inner membrane. It catalyses the reaction a quinone + NADH + 5 H(+)(in) = a quinol + NAD(+) + 4 H(+)(out). Functionally, NDH-1 shuttles electrons from NADH, via FMN and iron-sulfur (Fe-S) centers, to quinones in the respiratory chain. The immediate electron acceptor for the enzyme in this species is believed to be ubiquinone. Couples the redox reaction to proton translocation (for every two electrons transferred, four hydrogen ions are translocated across the cytoplasmic membrane), and thus conserves the redox energy in a proton gradient. In Bartonella grahamii (strain as4aup), this protein is NADH-quinone oxidoreductase subunit K.